Here is a 55-residue protein sequence, read N- to C-terminus: Large ribosomal subunit protein bL33m (55 aa).

This sequence belongs to the bacterial ribosomal protein bL33 family. Component of the mitochondrial large ribosomal subunit (mt-LSU). Mature yeast 74S mitochondrial ribosomes consist of a small (37S) and a large (54S) subunit. The 37S small subunit contains a 15S ribosomal RNA (15S mt-rRNA) and at least 32 different proteins. The 54S large subunit contains a 21S rRNA (21S mt-rRNA) and at least 45 different proteins. bL33m stabilizes the tRNA acceptor stem in the E-site.

It localises to the mitochondrion. Component of the mitochondrial ribosome (mitoribosome), a dedicated translation machinery responsible for the synthesis of mitochondrial genome-encoded proteins, including at least some of the essential transmembrane subunits of the mitochondrial respiratory chain. The mitoribosomes are attached to the mitochondrial inner membrane and translation products are cotranslationally integrated into the membrane. In Schizosaccharomyces pombe (strain 972 / ATCC 24843) (Fission yeast), this protein is Large ribosomal subunit protein bL33m (mrpl39).